Consider the following 318-residue polypeptide: tRNA uridine(34) hydroxylase (318 aa).

The 95-residue stretch at 125–219 (QDPNTVVIDA…YGTSKDTEGK (95 aa)) folds into the Rhodanese domain. The active-site Cysteine persulfide intermediate is the Cys-179.

It belongs to the TrhO family.

The enzyme catalyses uridine(34) in tRNA + AH2 + O2 = 5-hydroxyuridine(34) in tRNA + A + H2O. Its function is as follows. Catalyzes oxygen-dependent 5-hydroxyuridine (ho5U) modification at position 34 in tRNAs. The chain is tRNA uridine(34) hydroxylase from Acholeplasma laidlawii (strain PG-8A).